Reading from the N-terminus, the 902-residue chain is Translation initiation factor IF-2 (902 aa).

Basic and acidic residues-rich tracts occupy residues 1-12 and 43-60; these read MVDTKTPGDKKL and VVEK…EPHA. Positions 1–276 are disordered; sequence MVDTKTPGDK…KPGPQKERGR (276 aa). The span at 69–84 shows a compositional bias: pro residues; it reads PAAPAPSRPAPPPAPP. The segment covering 111–174 has biased composition (basic and acidic residues); it reads AKLREVEERR…ETEAKKRFGE (64 aa). 2 stretches are compositionally biased toward low complexity: residues 181–190 and 198–237; these read AARPATAAPA and APAA…AVAA. Residues 398–567 enclose the tr-type G domain; the sequence is TRSPVVTVMG…MIALQADILD (170 aa). The interval 407–414 is G1; the sequence is GHVDHGKT. 407 to 414 lines the GTP pocket; it reads GHVDHGKT. A G2 region spans residues 432 to 436; the sequence is GITQH. The interval 455–458 is G3; it reads DTPG. GTP contacts are provided by residues 455 to 459 and 509 to 512; these read DTPGH and NKID. Residues 509–512 are G4; that stretch reads NKID. A G5 region spans residues 545–547; sequence SAK.

This sequence belongs to the TRAFAC class translation factor GTPase superfamily. Classic translation factor GTPase family. IF-2 subfamily.

Its subcellular location is the cytoplasm. Its function is as follows. One of the essential components for the initiation of protein synthesis. Protects formylmethionyl-tRNA from spontaneous hydrolysis and promotes its binding to the 30S ribosomal subunits. Also involved in the hydrolysis of GTP during the formation of the 70S ribosomal complex. The sequence is that of Translation initiation factor IF-2 from Bradyrhizobium diazoefficiens (strain JCM 10833 / BCRC 13528 / IAM 13628 / NBRC 14792 / USDA 110).